We begin with the raw amino-acid sequence, 382 residues long: Queuine tRNA-ribosyltransferase (382 aa).

Aspartate 93 (proton acceptor) is an active-site residue. Substrate-binding positions include 93 to 97, aspartate 147, glutamine 191, and glycine 218; that span reads DSGGF. Residues 249 to 255 are RNA binding; it reads GVGKPED. The active-site Nucleophile is aspartate 268. Residues 273–277 form an RNA binding; important for wobble base 34 recognition region; that stretch reads TRNAR. Zn(2+) is bound by residues cysteine 306, cysteine 308, cysteine 311, and histidine 337.

The protein belongs to the queuine tRNA-ribosyltransferase family. As to quaternary structure, homodimer. Within each dimer, one monomer is responsible for RNA recognition and catalysis, while the other monomer binds to the replacement base PreQ1. Zn(2+) serves as cofactor.

It catalyses the reaction 7-aminomethyl-7-carbaguanine + guanosine(34) in tRNA = 7-aminomethyl-7-carbaguanosine(34) in tRNA + guanine. It functions in the pathway tRNA modification; tRNA-queuosine biosynthesis. In terms of biological role, catalyzes the base-exchange of a guanine (G) residue with the queuine precursor 7-aminomethyl-7-deazaguanine (PreQ1) at position 34 (anticodon wobble position) in tRNAs with GU(N) anticodons (tRNA-Asp, -Asn, -His and -Tyr). Catalysis occurs through a double-displacement mechanism. The nucleophile active site attacks the C1' of nucleotide 34 to detach the guanine base from the RNA, forming a covalent enzyme-RNA intermediate. The proton acceptor active site deprotonates the incoming PreQ1, allowing a nucleophilic attack on the C1' of the ribose to form the product. After dissociation, two additional enzymatic reactions on the tRNA convert PreQ1 to queuine (Q), resulting in the hypermodified nucleoside queuosine (7-(((4,5-cis-dihydroxy-2-cyclopenten-1-yl)amino)methyl)-7-deazaguanosine). The protein is Queuine tRNA-ribosyltransferase of Haemophilus influenzae (strain ATCC 51907 / DSM 11121 / KW20 / Rd).